We begin with the raw amino-acid sequence, 135 residues long: Small ribosomal subunit protein bS6 (135 aa).

K93 carries the post-translational modification N6-acetyllysine. The disordered stretch occupies residues 98–135 (EASPMVKAKDERRERRDDFANETADDAEAGDSEEEEEE). Positions 104 to 116 (KAKDERRERRDDF) are enriched in basic and acidic residues. Residues 120 to 135 (TADDAEAGDSEEEEEE) are compositionally biased toward acidic residues.

It belongs to the bacterial ribosomal protein bS6 family. Part of the 30S ribosomal subunit. Interacts weakly with uL2 in one of the 3.5 A resolved structures. 5 different forms of the protein, varying only in the number of C-terminal glutamate residues, were isolated. The sequence shown is form bS6-6, which is the longest. The first two Glu are encoded by the rpsF gene, the other Glu are added post-translationally by the RimK enzyme.

Functionally, binds together with bS18 to 16S ribosomal RNA. The protein is Small ribosomal subunit protein bS6 (rpsF) of Escherichia coli (strain K12).